Consider the following 190-residue polypeptide: dCTP deaminase (190 aa).

DCTP is bound at residue 113–118 (KSTYAR). Glutamate 139 (proton donor/acceptor) is an active-site residue. 4 residues coordinate dCTP: glutamine 158, tyrosine 172, lysine 181, and glutamine 182.

The protein belongs to the dCTP deaminase family. In terms of assembly, homotrimer.

The catalysed reaction is dCTP + H2O + H(+) = dUTP + NH4(+). It participates in pyrimidine metabolism; dUMP biosynthesis; dUMP from dCTP (dUTP route): step 1/2. Functionally, catalyzes the deamination of dCTP to dUTP. The sequence is that of dCTP deaminase from Chlamydia muridarum (strain MoPn / Nigg).